The chain runs to 223 residues: Deoxyribose-phosphate aldolase (223 aa).

Asp92 functions as the Proton donor/acceptor in the catalytic mechanism. Lys154 (schiff-base intermediate with acetaldehyde) is an active-site residue. Catalysis depends on Lys182, which acts as the Proton donor/acceptor.

This sequence belongs to the DeoC/FbaB aldolase family. DeoC type 1 subfamily.

The protein resides in the cytoplasm. It catalyses the reaction 2-deoxy-D-ribose 5-phosphate = D-glyceraldehyde 3-phosphate + acetaldehyde. It functions in the pathway carbohydrate degradation; 2-deoxy-D-ribose 1-phosphate degradation; D-glyceraldehyde 3-phosphate and acetaldehyde from 2-deoxy-alpha-D-ribose 1-phosphate: step 2/2. In terms of biological role, catalyzes a reversible aldol reaction between acetaldehyde and D-glyceraldehyde 3-phosphate to generate 2-deoxy-D-ribose 5-phosphate. The polypeptide is Deoxyribose-phosphate aldolase (Pasteurella multocida (strain Pm70)).